A 246-amino-acid polypeptide reads, in one-letter code: Orotidine 5'-phosphate decarboxylase (246 aa).

Substrate is bound by residues D22, K44, 71-80 (DLKYHDIPHT), T130, R191, Q201, G221, and R222. K73 acts as the Proton donor in catalysis.

The protein belongs to the OMP decarboxylase family. Type 1 subfamily. As to quaternary structure, homodimer.

The enzyme catalyses orotidine 5'-phosphate + H(+) = UMP + CO2. Its pathway is pyrimidine metabolism; UMP biosynthesis via de novo pathway; UMP from orotate: step 2/2. In terms of biological role, catalyzes the decarboxylation of orotidine 5'-monophosphate (OMP) to uridine 5'-monophosphate (UMP). This Neisseria meningitidis serogroup C (strain 053442) protein is Orotidine 5'-phosphate decarboxylase.